Reading from the N-terminus, the 227-residue chain is uncharacterized protein (227 aa).

The first 22 residues, 1 to 22, serve as a signal peptide directing secretion; sequence MDSVMRKSLFLLLPLVVTNAHA.

This is an uncharacterized protein from Salmonella typhi.